Consider the following 457-residue polypeptide: ATP synthase subunit beta (457 aa).

Glycine 147 to threonine 154 is an ATP binding site.

This sequence belongs to the ATPase alpha/beta chains family. As to quaternary structure, F-type ATPases have 2 components, CF(1) - the catalytic core - and CF(0) - the membrane proton channel. CF(1) has five subunits: alpha(3), beta(3), gamma(1), delta(1), epsilon(1). CF(0) has three main subunits: a(1), b(2) and c(9-12). The alpha and beta chains form an alternating ring which encloses part of the gamma chain. CF(1) is attached to CF(0) by a central stalk formed by the gamma and epsilon chains, while a peripheral stalk is formed by the delta and b chains.

It is found in the cell inner membrane. It carries out the reaction ATP + H2O + 4 H(+)(in) = ADP + phosphate + 5 H(+)(out). In terms of biological role, produces ATP from ADP in the presence of a proton gradient across the membrane. The catalytic sites are hosted primarily by the beta subunits. The chain is ATP synthase subunit beta from Haemophilus influenzae (strain PittGG).